Reading from the N-terminus, the 39-residue chain is U-limacoditoxin(13)-As54 (39 aa).

The N-terminal stretch at 1 to 23 (MSKYIVLLVVSAIALLQFSMIEC) is a signal peptide. Phe-37 is modified (phenylalanine amide).

It belongs to the FARP (FMRFamide related peptide) family. In terms of tissue distribution, expressed by the venom secretory cell of the spine. The spine is a cuticular structure containing a single large nucleated venom-secreting cell at its base. It is an independent unit capable of producing, storing and injecting venom. On the back of A.stimulea caterpillars, spines are grouped together by 50 to 100 to form scoli, of which there are eight.

The protein resides in the secreted. In terms of biological role, strongly activates (at 30 uM) the human neuropeptide FF receptor 1 (NPFF1R), a G-protein coupled receptor, with an effect that is equipotent to the endogenous RFRP-1 ligand in activating NPFFR1. Is toxic when injected into Drosophila melanogaster. Also shows a moderate anthelmintic activity against the parasitic nematode H.contortus (drug susceptible Kirby isolate) (IC(50)=20.1 uM). The polypeptide is U-limacoditoxin(13)-As54 (Acharia stimulea (Saddleback caterpillar moth)).